We begin with the raw amino-acid sequence, 189 residues long: GTP cyclohydrolase 1 (189 aa).

Positions 78, 81, and 150 each coordinate Zn(2+).

The protein belongs to the GTP cyclohydrolase I family. As to quaternary structure, toroid-shaped homodecamer, composed of two pentamers of five dimers.

The catalysed reaction is GTP + H2O = 7,8-dihydroneopterin 3'-triphosphate + formate + H(+). The protein operates within cofactor biosynthesis; 7,8-dihydroneopterin triphosphate biosynthesis; 7,8-dihydroneopterin triphosphate from GTP: step 1/1. This is GTP cyclohydrolase 1 from Listeria welshimeri serovar 6b (strain ATCC 35897 / DSM 20650 / CCUG 15529 / CIP 8149 / NCTC 11857 / SLCC 5334 / V8).